A 142-amino-acid chain; its full sequence is Large ribosomal subunit protein uL13 (142 aa).

This sequence belongs to the universal ribosomal protein uL13 family. In terms of assembly, part of the 50S ribosomal subunit.

In terms of biological role, this protein is one of the early assembly proteins of the 50S ribosomal subunit, although it is not seen to bind rRNA by itself. It is important during the early stages of 50S assembly. This chain is Large ribosomal subunit protein uL13, found in Burkholderia pseudomallei (strain 1106a).